A 188-amino-acid polypeptide reads, in one-letter code: 2-amino-4-hydroxy-6-hydroxymethyldihydropteridine pyrophosphokinase (188 aa).

The protein belongs to the HPPK family.

It carries out the reaction 6-hydroxymethyl-7,8-dihydropterin + ATP = (7,8-dihydropterin-6-yl)methyl diphosphate + AMP + H(+). It functions in the pathway cofactor biosynthesis; tetrahydrofolate biosynthesis; 2-amino-4-hydroxy-6-hydroxymethyl-7,8-dihydropteridine diphosphate from 7,8-dihydroneopterin triphosphate: step 4/4. Its function is as follows. Catalyzes the transfer of pyrophosphate from adenosine triphosphate (ATP) to 6-hydroxymethyl-7,8-dihydropterin, an enzymatic step in folate biosynthesis pathway. The polypeptide is 2-amino-4-hydroxy-6-hydroxymethyldihydropteridine pyrophosphokinase (folK) (Mycobacterium tuberculosis (strain ATCC 25618 / H37Rv)).